The following is a 380-amino-acid chain: Queuine tRNA-ribosyltransferase (380 aa).

Asp96 serves as the catalytic Proton acceptor. Residues 96–100 (DSGGF), Asp150, Gln193, and Gly220 each bind substrate. The RNA binding stretch occupies residues 251-257 (GVGAPDS). Catalysis depends on Asp270, which acts as the Nucleophile. Residues 275-279 (TRIAR) are RNA binding; important for wobble base 34 recognition. Positions 308, 310, 313, and 339 each coordinate Zn(2+).

It belongs to the queuine tRNA-ribosyltransferase family. In terms of assembly, homodimer. Within each dimer, one monomer is responsible for RNA recognition and catalysis, while the other monomer binds to the replacement base PreQ1. It depends on Zn(2+) as a cofactor.

The enzyme catalyses 7-aminomethyl-7-carbaguanine + guanosine(34) in tRNA = 7-aminomethyl-7-carbaguanosine(34) in tRNA + guanine. The protein operates within tRNA modification; tRNA-queuosine biosynthesis. Its function is as follows. Catalyzes the base-exchange of a guanine (G) residue with the queuine precursor 7-aminomethyl-7-deazaguanine (PreQ1) at position 34 (anticodon wobble position) in tRNAs with GU(N) anticodons (tRNA-Asp, -Asn, -His and -Tyr). Catalysis occurs through a double-displacement mechanism. The nucleophile active site attacks the C1' of nucleotide 34 to detach the guanine base from the RNA, forming a covalent enzyme-RNA intermediate. The proton acceptor active site deprotonates the incoming PreQ1, allowing a nucleophilic attack on the C1' of the ribose to form the product. After dissociation, two additional enzymatic reactions on the tRNA convert PreQ1 to queuine (Q), resulting in the hypermodified nucleoside queuosine (7-(((4,5-cis-dihydroxy-2-cyclopenten-1-yl)amino)methyl)-7-deazaguanosine). This is Queuine tRNA-ribosyltransferase from Streptococcus pyogenes serotype M1.